The primary structure comprises 135 residues: CTP pyrophosphohydrolase (135 aa).

Residues 2-127 enclose the Nudix hydrolase domain; it reads KMIEVVAAII…DIPLLEAFMA (126 aa). Residues 34-39, R72, and D118 contribute to the substrate site; that span reads FAGGKV. Residues 37-58 carry the Nudix box motif; the sequence is GKVEPDESQRQALVRELREELG.

This sequence belongs to the Nudix hydrolase family. In terms of assembly, monomer. It depends on Mg(2+) as a cofactor. Mn(2+) serves as cofactor.

The catalysed reaction is CTP + H2O = CMP + diphosphate + H(+). It catalyses the reaction dCTP + H2O = dCMP + diphosphate + H(+). In terms of biological role, hydrolase with a preference for pyrimidine substrates. Has high activity with 5-methyl-dCTP, and much lower activity with CTP, dCTP, 5-hydroxy-dCTP, 2-hydroxy-dATP and 8-hydroxy-dGTP. This Escherichia coli (strain K12) protein is CTP pyrophosphohydrolase (nudG).